We begin with the raw amino-acid sequence, 105 residues long: Malonate decarboxylase acyl carrier protein (105 aa).

S28 is subject to O-(phosphoribosyl dephospho-coenzyme A)serine.

The protein belongs to the MdcC family. In terms of processing, covalently binds the prosthetic group of malonate decarboxylase.

It is found in the cytoplasm. In terms of biological role, subunit of malonate decarboxylase, it is an acyl carrier protein to which acetyl and malonyl thioester residues are bound via a 2'-(5''-phosphoribosyl)-3'-dephospho-CoA prosthetic group and turn over during the catalytic mechanism. This Bradyrhizobium diazoefficiens (strain JCM 10833 / BCRC 13528 / IAM 13628 / NBRC 14792 / USDA 110) protein is Malonate decarboxylase acyl carrier protein.